The chain runs to 445 residues: Exodeoxyribonuclease 7 large subunit (445 aa).

Belongs to the XseA family. Heterooligomer composed of large and small subunits.

It is found in the cytoplasm. It carries out the reaction Exonucleolytic cleavage in either 5'- to 3'- or 3'- to 5'-direction to yield nucleoside 5'-phosphates.. Functionally, bidirectionally degrades single-stranded DNA into large acid-insoluble oligonucleotides, which are then degraded further into small acid-soluble oligonucleotides. The chain is Exodeoxyribonuclease 7 large subunit from Staphylococcus haemolyticus (strain JCSC1435).